We begin with the raw amino-acid sequence, 357 residues long: tRNA N6-adenosine threonylcarbamoyltransferase (357 aa).

Positions 116 and 120 each coordinate Fe cation. Substrate contacts are provided by residues 139 to 143 (LVSGG), D172, G185, and N284. D312 lines the Fe cation pocket.

The protein belongs to the KAE1 / TsaD family. Fe(2+) serves as cofactor.

It is found in the cytoplasm. The enzyme catalyses L-threonylcarbamoyladenylate + adenosine(37) in tRNA = N(6)-L-threonylcarbamoyladenosine(37) in tRNA + AMP + H(+). Functionally, required for the formation of a threonylcarbamoyl group on adenosine at position 37 (t(6)A37) in tRNAs that read codons beginning with adenine. Is involved in the transfer of the threonylcarbamoyl moiety of threonylcarbamoyl-AMP (TC-AMP) to the N6 group of A37, together with TsaE and TsaB. TsaD likely plays a direct catalytic role in this reaction. The polypeptide is tRNA N6-adenosine threonylcarbamoyltransferase (Synechococcus sp. (strain CC9605)).